We begin with the raw amino-acid sequence, 123 residues long: MPFTTSIQPRRQRLSLYTAPLHLRHKLFNAKLSPDLQKKLGVKRLPVRRGDTVMIMRGDFKGVTGKVVKVDLKKVRIYVEGATRTNSKGQTVYYPIHPSKVMIIDIDTSDKIRQKIIQRRKKE.

It belongs to the universal ribosomal protein uL24 family. In terms of assembly, part of the 50S ribosomal subunit.

In terms of biological role, one of two assembly initiator proteins, it binds directly to the 5'-end of the 23S rRNA, where it nucleates assembly of the 50S subunit. Its function is as follows. Located at the polypeptide exit tunnel on the outside of the subunit. This chain is Large ribosomal subunit protein uL24, found in Pyrobaculum islandicum (strain DSM 4184 / JCM 9189 / GEO3).